A 430-amino-acid polypeptide reads, in one-letter code: Histidinol dehydrogenase (430 aa).

NAD(+)-binding residues include tyrosine 130, glutamine 191, and asparagine 214. Positions 237, 259, and 262 each coordinate substrate. Glutamine 259 and histidine 262 together coordinate Zn(2+). Active-site proton acceptor residues include glutamate 327 and histidine 328. Histidine 328, aspartate 361, glutamate 415, and histidine 420 together coordinate substrate. Aspartate 361 lines the Zn(2+) pocket. Histidine 420 is a binding site for Zn(2+).

It belongs to the histidinol dehydrogenase family. Zn(2+) serves as cofactor.

The enzyme catalyses L-histidinol + 2 NAD(+) + H2O = L-histidine + 2 NADH + 3 H(+). The protein operates within amino-acid biosynthesis; L-histidine biosynthesis; L-histidine from 5-phospho-alpha-D-ribose 1-diphosphate: step 9/9. Functionally, catalyzes the sequential NAD-dependent oxidations of L-histidinol to L-histidinaldehyde and then to L-histidine. In Brucella suis biovar 1 (strain 1330), this protein is Histidinol dehydrogenase.